We begin with the raw amino-acid sequence, 258 residues long: Granzyme A (258 aa).

The N-terminal stretch at 1–26 is a signal peptide; the sequence is MNIPFPFSFPPAICLLLIPGVFPVSC. The propeptide at 27–28 is activation peptide; that stretch reads EG. The Peptidase S1 domain occupies 29 to 255; that stretch reads IIGGNEVAPH…HLNWIKKTIA (227 aa). Residues Cys52 and Cys68 are joined by a disulfide bond. Active-site charge relay system residues include His67 and Asp112. Intrachain disulfides connect Cys146-Cys217, Cys178-Cys196, and Cys207-Cys230. Residue Asn169 is glycosylated (N-linked (GlcNAc...) asparagine). The active-site Charge relay system is the Ser211.

Belongs to the peptidase S1 family. Granzyme subfamily. In terms of assembly, homodimer; disulfide-linked. Interacts with APEX1.

The protein localises to the secreted. It is found in the cytoplasmic granule. It carries out the reaction Hydrolysis of proteins, including fibronectin, type IV collagen and nucleolin. Preferential cleavage: -Arg-|-Xaa-, -Lys-|-Xaa- &gt;&gt; -Phe-|-Xaa- in small molecule substrates.. Abundant protease in the cytosolic granules of cytotoxic T-cells and NK-cells which activates caspase-independent pyroptosis when delivered into the target cell through the immunological synapse. It cleaves after Lys or Arg. Cleaves APEX1 after 'Lys-31' and destroys its oxidative repair activity. Cleaves the nucleosome assembly protein SET after 'Lys-189', which disrupts its nucleosome assembly activity and allows the SET complex to translocate into the nucleus to nick and degrade the DNA. This chain is Granzyme A (GZMA), found in Bos taurus (Bovine).